The chain runs to 368 residues: Quinolinate synthase (368 aa).

Iminosuccinate-binding residues include His46 and Ser63. [4Fe-4S] cluster is bound at residue Cys110. Residues 141 to 143 (YVN) and Ser162 each bind iminosuccinate. Cys230 provides a ligand contact to [4Fe-4S] cluster. Iminosuccinate is bound by residues 256 to 258 (HPE) and Thr273. Residue Cys320 participates in [4Fe-4S] cluster binding.

The protein belongs to the quinolinate synthase family. Type 3 subfamily. [4Fe-4S] cluster is required as a cofactor.

The protein localises to the cytoplasm. It catalyses the reaction iminosuccinate + dihydroxyacetone phosphate = quinolinate + phosphate + 2 H2O + H(+). The protein operates within cofactor biosynthesis; NAD(+) biosynthesis; quinolinate from iminoaspartate: step 1/1. Functionally, catalyzes the condensation of iminoaspartate with dihydroxyacetone phosphate to form quinolinate. The polypeptide is Quinolinate synthase (Bacillus cereus (strain G9842)).